The sequence spans 485 residues: MALLVETTTSGREYKVKDMSQADFGRLEIELAEVEMPGLMSCRTEFGPSQPFKGARITGSLHMTIQTAVLIETLTALGAEVRWCSCNIFSTQDHAAAAIARDSAAVFAWKGETLQEYWWCSERALDWGPGGGPDLIVDDGGDVTLLIHEGVKAEEVFEKTGQLPDPSSTDNAEMQIVLTIIRDGLKTDPKRYQKMKTRIVGVSEETTTGVKRLYQMQASGTLLFPAINVNDSVTKSKFDNLYGCRHSLPDGLMRATDVMIAGKVAVVCGYGDVGKGCAAALKQGGARVIVTEIDPICALQALMEGLQVLTLEDVISEADIFVTTTGNKDIIMVSDMKKMKNNAIVCNIGHFDNEIDMHGLETYPGVKRITIKPQTDRWVFPETKSGIIVLAEGRLMNLGCATGHPSFVMSCSFTNQVIAQIELWKEKTSGKYEKKVYVLPKHLDEKVAALHLGQLGAKLTKLSKDQADYISVPVEGPYKPAHYRY.

Substrate contacts are provided by T64, D139, and E205. T206–T208 lines the NAD(+) pocket. Positions 235 and 239 each coordinate substrate. NAD(+) contacts are provided by residues N240, G269 to G274, E292, N327, I348 to H350, and N397.

This sequence belongs to the adenosylhomocysteinase family. NAD(+) is required as a cofactor.

The enzyme catalyses S-adenosyl-L-homocysteine + H2O = L-homocysteine + adenosine. Its pathway is amino-acid biosynthesis; L-homocysteine biosynthesis; L-homocysteine from S-adenosyl-L-homocysteine: step 1/1. Adenosylhomocysteine is a competitive inhibitor of S-adenosyl-L-methionine-dependent methyl transferase reactions; therefore adenosylhomocysteinase may play a key role in the control of methylations via regulation of the intracellular concentration of adenosylhomocysteine. This is Adenosylhomocysteinase (SAHH) from Medicago sativa (Alfalfa).